A 292-amino-acid chain; its full sequence is Mycothiol acetyltransferase (292 aa).

N-acetyltransferase domains follow at residues 2 to 138 (AEVV…PSAP) and 141 to 292 (VTVR…YAHS). A 1D-myo-inositol 2-(L-cysteinylamino)-2-deoxy-alpha-D-glucopyranoside-binding site is contributed by Glu-33. 68 to 70 (AVV) contacts acetyl-CoA. Residues Glu-168, Lys-215, and Glu-225 each coordinate 1D-myo-inositol 2-(L-cysteinylamino)-2-deoxy-alpha-D-glucopyranoside. Acetyl-CoA-binding positions include 229–231 (VAV) and 236–242 (QGRGLGR). Tyr-263 is a binding site for 1D-myo-inositol 2-(L-cysteinylamino)-2-deoxy-alpha-D-glucopyranoside. Acetyl-CoA is bound at residue 268–273 (NAAALH).

Belongs to the acetyltransferase family. MshD subfamily. Monomer.

The catalysed reaction is 1D-myo-inositol 2-(L-cysteinylamino)-2-deoxy-alpha-D-glucopyranoside + acetyl-CoA = mycothiol + CoA + H(+). Its function is as follows. Catalyzes the transfer of acetyl from acetyl-CoA to desacetylmycothiol (Cys-GlcN-Ins) to form mycothiol. The sequence is that of Mycothiol acetyltransferase from Tsukamurella paurometabola (strain ATCC 8368 / DSM 20162 / CCUG 35730 / CIP 100753 / JCM 10117 / KCTC 9821 / NBRC 16120 / NCIMB 702349 / NCTC 13040) (Corynebacterium paurometabolum).